A 948-amino-acid chain; its full sequence is Isoleucine--tRNA ligase (948 aa).

The short motif at 58 to 68 is the 'HIGH' region element; sequence PYANGSIHIGH. Glu-572 is a binding site for L-isoleucyl-5'-AMP. The 'KMSKS' region signature appears at 613 to 617; the sequence is KMSKS. Lys-616 is a binding site for ATP. Residues Cys-911, Cys-914, Cys-931, and Cys-934 each contribute to the Zn(2+) site.

This sequence belongs to the class-I aminoacyl-tRNA synthetase family. IleS type 1 subfamily. Monomer. Zn(2+) is required as a cofactor.

The protein localises to the cytoplasm. It catalyses the reaction tRNA(Ile) + L-isoleucine + ATP = L-isoleucyl-tRNA(Ile) + AMP + diphosphate. Its function is as follows. Catalyzes the attachment of isoleucine to tRNA(Ile). As IleRS can inadvertently accommodate and process structurally similar amino acids such as valine, to avoid such errors it has two additional distinct tRNA(Ile)-dependent editing activities. One activity is designated as 'pretransfer' editing and involves the hydrolysis of activated Val-AMP. The other activity is designated 'posttransfer' editing and involves deacylation of mischarged Val-tRNA(Ile). The sequence is that of Isoleucine--tRNA ligase from Edwardsiella ictaluri (strain 93-146).